Reading from the N-terminus, the 230-residue chain is Phosphatidate cytidylyltransferase (230 aa).

The next 6 membrane-spanning stretches (helical) occupy residues 33–53 (FVIA…LVGT), 67–87 (IPDL…LIFL), 95–115 (WLIM…MIGG), 133–153 (WSGL…VSFI), 167–187 (IYLF…DLFI), and 206–226 (HGGV…LFLM).

Belongs to the CDS family.

The protein localises to the cell membrane. It catalyses the reaction a 1,2-diacyl-sn-glycero-3-phosphate + CTP + H(+) = a CDP-1,2-diacyl-sn-glycerol + diphosphate. It functions in the pathway phospholipid metabolism; CDP-diacylglycerol biosynthesis; CDP-diacylglycerol from sn-glycerol 3-phosphate: step 3/3. In Rickettsia conorii (strain ATCC VR-613 / Malish 7), this protein is Phosphatidate cytidylyltransferase (cdsA).